Here is a 250-residue protein sequence, read N- to C-terminus: 5-oxoprolinase subunit A (250 aa).

The protein belongs to the LamB/PxpA family. Forms a complex composed of PxpA, PxpB and PxpC.

The catalysed reaction is 5-oxo-L-proline + ATP + 2 H2O = L-glutamate + ADP + phosphate + H(+). Catalyzes the cleavage of 5-oxoproline to form L-glutamate coupled to the hydrolysis of ATP to ADP and inorganic phosphate. The polypeptide is 5-oxoprolinase subunit A (Staphylococcus haemolyticus (strain JCSC1435)).